We begin with the raw amino-acid sequence, 287 residues long: rRNA adenine N-6-methyltransferase (287 aa).

A compositionally biased stretch (basic residues) spans 1-13 (MKKKNHKYRGKKL). The interval 1–21 (MKKKNHKYRGKKLNRGESPNF) is disordered. Residues His-25, Met-27, Gly-52, Glu-73, Asp-98, and Asn-114 each contribute to the S-adenosyl-L-methionine site.

This sequence belongs to the class I-like SAM-binding methyltransferase superfamily. rRNA adenine N(6)-methyltransferase family.

In terms of biological role, involved in erythromycin resistance. In Bacillus licheniformis, this protein is rRNA adenine N-6-methyltransferase (ermD).